A 156-amino-acid chain; its full sequence is Cyanate hydratase (156 aa).

Catalysis depends on residues arginine 96, glutamate 99, and serine 122.

This sequence belongs to the cyanase family.

It carries out the reaction cyanate + hydrogencarbonate + 3 H(+) = NH4(+) + 2 CO2. Functionally, catalyzes the reaction of cyanate with bicarbonate to produce ammonia and carbon dioxide. This Pseudomonas fluorescens (strain ATCC BAA-477 / NRRL B-23932 / Pf-5) protein is Cyanate hydratase.